The chain runs to 609 residues: Glutamine--fructose-6-phosphate aminotransferase [isomerizing] (609 aa).

The active-site Nucleophile; for GATase activity is Cys2. The region spanning 2-219 is the Glutamine amidotransferase type-2 domain; it reads CGIFGYIGAK…SGELAVVGLG (218 aa). 2 SIS domains span residues 280 to 426 and 458 to 599; these read ISEK…LKQT and WAND…IDRP. The active-site For Fru-6P isomerization activity is the Lys604.

In terms of assembly, homodimer.

It is found in the cytoplasm. The catalysed reaction is D-fructose 6-phosphate + L-glutamine = D-glucosamine 6-phosphate + L-glutamate. Functionally, catalyzes the first step in hexosamine metabolism, converting fructose-6P into glucosamine-6P using glutamine as a nitrogen source. This Chlamydia caviae (strain ATCC VR-813 / DSM 19441 / 03DC25 / GPIC) (Chlamydophila caviae) protein is Glutamine--fructose-6-phosphate aminotransferase [isomerizing].